Reading from the N-terminus, the 333-residue chain is Forkhead box protein unc-130 (333 aa).

A disordered region spans residues 1–126 (MLFSMESILS…MSGHRKSSHA (126 aa)). Residues 14–24 (PKLEPPPKLEP) are compositionally biased toward basic and acidic residues. Positions 37 to 50 (RSNTRLSEPSTSAS) are enriched in polar residues. Over residues 52 to 62 (LEHDLKFGESR) the composition is skewed to basic and acidic residues. Residues 98–110 (SSDDAKDDDDDDD) are compositionally biased toward acidic residues. The fork-head DNA-binding region spans 127–221 (KPPYSYIALI…DNGSFLRRRK (95 aa)). Residues 304–333 (APVSSGQKRTSSSSSPNENGSSAVSDKLSA) are disordered. Over residues 307–333 (SSGQKRTSSSSSPNENGSSAVSDKLSA) the composition is skewed to low complexity.

As to expression, expressed in ventral body wall muscle. Expressed in the structural cells and two neurons of each ray in the male tail.

It is found in the nucleus. Its function is as follows. Probable transcription factor. Binds to DNA sequence motif 5'-CTGTTTCA-3'. Required for the migration of distal tip cells (DTC) and axonal growth-cones along the dorsal-ventral axis of the body wall, acting by cell autonomous repression of unc-129/TGF-beta expression in ventral body muscle during embyogenesis. Binds to the promoter region of the unc-129 gene. Plays a role in dorsal-ventral patterning and fate specification of the postembryonic mesoderm. Involved in male tail morphogenesis and in embryogenesis. Plays a role in the development of sensory neurons and is required to repress AWA fate and promote ASG fate in the ASG chemosensory neurons. Regulates expression of a class of small RNAs, known as 21U-RNAs. This Caenorhabditis elegans protein is Forkhead box protein unc-130.